The following is a 664-amino-acid chain: Protein LYK5 (664 aa).

The first 26 residues, 1–26, serve as a signal peptide directing secretion; it reads MAACTLHALSVTLFLLLFFAVSPAKA. Over 27 to 277 the chain is Extracellular; the sequence is QQPYVNNHQL…DPPGSSSSHK (251 aa). Residues asparagine 45, asparagine 81, asparagine 111, asparagine 125, and asparagine 129 are each glycosylated (N-linked (GlcNAc...) asparagine). 3 cysteine pairs are disulfide-bonded: cysteine 52-cysteine 114, cysteine 58-cysteine 181, and cysteine 112-cysteine 179. Residue 135–141 coordinates chitin; that stretch reads GDETYFS. An N-linked (GlcNAc...) asparagine glycan is attached at asparagine 144. 164–170 is a binding site for chitin; the sequence is ERQLTPG. Residues 195-238 form the LysM domain; that stretch reads LTYLVAMGDSISGIAEMFNSTSAAITEGNELTSDNIFFFTPVLV. An N-linked (GlcNAc...) asparagine glycan is attached at asparagine 213. The span at 251–269 shows a compositional bias: pro residues; it reads PSPPPPPVVATPPQTPVDP. The disordered stretch occupies residues 251-270; that stretch reads PSPPPPPVVATPPQTPVDPP. Residues 278-298 form a helical membrane-spanning segment; that stretch reads WIYIGIGIGAGLLLLLSILAL. The Cytoplasmic segment spans residues 299-664; sequence CFYKRRSKKK…DLLRSGSLGN (366 aa). In terms of domain architecture, Protein kinase spans 351–643; sequence KSAIESLTLY…TQVLTTLSMI (293 aa). Residues 357 to 365 and lysine 395 each bind ATP; that span reads LTLYRFNDL.

Belongs to the protein kinase superfamily. Ser/Thr protein kinase family.

The protein resides in the cell membrane. Functionally, may recognize microbe-derived N-acetylglucosamine (NAG)-containing ligands. In Arabidopsis thaliana (Mouse-ear cress), this protein is Protein LYK5 (LYK5).